The primary structure comprises 390 residues: tRNA(Met) cytidine acetate ligase (390 aa).

ATP is bound by residues 7–20, glycine 101, asparagine 162, and arginine 187; that span reads VVEY…HKLH.

It belongs to the TmcAL family.

It is found in the cytoplasm. It catalyses the reaction cytidine(34) in elongator tRNA(Met) + acetate + ATP = N(4)-acetylcytidine(34) in elongator tRNA(Met) + AMP + diphosphate. Catalyzes the formation of N(4)-acetylcytidine (ac(4)C) at the wobble position of elongator tRNA(Met), using acetate and ATP as substrates. First activates an acetate ion to form acetyladenylate (Ac-AMP) and then transfers the acetyl group to tRNA to form ac(4)C34. This is tRNA(Met) cytidine acetate ligase from Listeria monocytogenes serovar 1/2a (strain ATCC BAA-679 / EGD-e).